The sequence spans 204 residues: Thymidine kinase (204 aa).

ATP contacts are provided by residues Gly-23 to Thr-30 and Asp-95 to Gln-98. The Proton acceptor role is filled by Glu-96. Zn(2+)-binding residues include Cys-152, Cys-155, Cys-184, and Cys-187.

Belongs to the thymidine kinase family. As to quaternary structure, homotetramer.

It localises to the cytoplasm. The enzyme catalyses thymidine + ATP = dTMP + ADP + H(+). This Porphyromonas gingivalis (strain ATCC BAA-308 / W83) protein is Thymidine kinase.